The chain runs to 501 residues: Glutamate--tRNA ligase (501 aa).

The short motif at 21–31 is the 'HIGH' region element; sequence PSPTGTPHVGL. Positions 266–270 match the 'KMSKS' region motif; it reads KLSKR. Lysine 269 is a binding site for ATP.

It belongs to the class-I aminoacyl-tRNA synthetase family. Glutamate--tRNA ligase type 1 subfamily. In terms of assembly, monomer.

Its subcellular location is the cytoplasm. It catalyses the reaction tRNA(Glu) + L-glutamate + ATP = L-glutamyl-tRNA(Glu) + AMP + diphosphate. Catalyzes the attachment of glutamate to tRNA(Glu) in a two-step reaction: glutamate is first activated by ATP to form Glu-AMP and then transferred to the acceptor end of tRNA(Glu). The polypeptide is Glutamate--tRNA ligase (Kineococcus radiotolerans (strain ATCC BAA-149 / DSM 14245 / SRS30216)).